We begin with the raw amino-acid sequence, 101 residues long: MVGQAGHYRWQGEDLILHCQLQPKASGDDIVGVHGDRLKIRITAPPVDGKANEYLIKWLSKQFRVPKGNIKILQGELGRHKTLGIHAPRHLPEEAHICFPK.

It belongs to the UPF0235 family.

The protein is UPF0235 protein CJA_0091 of Cellvibrio japonicus (strain Ueda107) (Pseudomonas fluorescens subsp. cellulosa).